Consider the following 204-residue polypeptide: MRG/MORF4L-binding protein (204 aa).

Over residues 1-15 (MGEAEVGGTGAPGDK) the composition is skewed to gly residues. The disordered stretch occupies residues 1-27 (MGEAEVGGTGAPGDKGPGEAAPSPAEE). Glycine 2 is modified (N-acetylglycine). Serine 23 bears the Phosphoserine mark. A Glycyl lysine isopeptide (Lys-Gly) (interchain with G-Cter in SUMO2) cross-link involves residue lysine 127. Basic and acidic residues-rich tracts occupy residues 128-140 (EEMKEDVDPHSGA) and 153-175 (ALEKSSKDKEKNSSDLGCKEGAD). The disordered stretch occupies residues 128–204 (EEMKEDVDPH…SPSAAKRRRT (77 aa)). Residues 189–198 (ANSNPSSPSA) show a composition bias toward low complexity. 2 positions are modified to phosphoserine: serine 191 and serine 195.

Belongs to the EAF7 family. Component of the NuA4 histone acetyltransferase complex which contains the catalytic subunit KAT5/TIP60 and the subunits EP400, TRRAP/PAF400, BRD8/SMAP, EPC1, DMAP1/DNMAP1, RUVBL1/TIP49, RUVBL2, ING3, actin, ACTL6A/BAF53A, MORF4L1/MRG15, MORF4L2/MRGX, MRGBP, YEATS4/GAS41, VPS72/YL1 and MEAF6. MRGBP may interact directly with MORF4L1/MRG15 and MORF4L2/MRGX.

The protein resides in the nucleus. In terms of biological role, component of the NuA4 histone acetyltransferase (HAT) complex which is involved in transcriptional activation of select genes principally by acetylation of nucleosomal histones H4 and H2A. This modification may both alter nucleosome - DNA interactions and promote interaction of the modified histones with other proteins which positively regulate transcription. This complex may be required for the activation of transcriptional programs associated with oncogene and proto-oncogene mediated growth induction, tumor suppressor mediated growth arrest and replicative senescence, apoptosis, and DNA repair. NuA4 may also play a direct role in DNA repair when recruited to sites of DNA damage. This Mus musculus (Mouse) protein is MRG/MORF4L-binding protein (Mrgbp).